We begin with the raw amino-acid sequence, 371 residues long: N-acetyldiaminopimelate deacetylase (371 aa).

D68 is a catalytic residue. The active-site Proton acceptor is E127.

The protein belongs to the peptidase M20A family. N-acetyldiaminopimelate deacetylase subfamily.

The catalysed reaction is N-acetyl-(2S,6S)-2,6-diaminopimelate + H2O = (2S,6S)-2,6-diaminopimelate + acetate. It functions in the pathway amino-acid biosynthesis; L-lysine biosynthesis via DAP pathway; LL-2,6-diaminopimelate from (S)-tetrahydrodipicolinate (acetylase route): step 3/3. Catalyzes the conversion of N-acetyl-diaminopimelate to diaminopimelate and acetate. This is N-acetyldiaminopimelate deacetylase from Listeria innocua serovar 6a (strain ATCC BAA-680 / CLIP 11262).